A 402-amino-acid chain; its full sequence is Oxysterol-binding protein 12 (402 aa).

The disordered stretch occupies residues 333–366 (NNNNDKETAEEKAKIEEKQRKEESERREKGILWE). Over residues 336–366 (NDKETAEEKAKIEEKQRKEESERREKGILWE) the composition is skewed to basic and acidic residues.

It belongs to the OSBP family.

The chain is Oxysterol-binding protein 12 (osbL) from Dictyostelium discoideum (Social amoeba).